The following is a 196-amino-acid chain: Protein GrpE (196 aa).

A disordered region spans residues 1 to 24; the sequence is MAENERTTENFQPQDPSYAEAATT.

Belongs to the GrpE family. Homodimer.

It localises to the cytoplasm. Its function is as follows. Participates actively in the response to hyperosmotic and heat shock by preventing the aggregation of stress-denatured proteins, in association with DnaK and GrpE. It is the nucleotide exchange factor for DnaK and may function as a thermosensor. Unfolded proteins bind initially to DnaJ; upon interaction with the DnaJ-bound protein, DnaK hydrolyzes its bound ATP, resulting in the formation of a stable complex. GrpE releases ADP from DnaK; ATP binding to DnaK triggers the release of the substrate protein, thus completing the reaction cycle. Several rounds of ATP-dependent interactions between DnaJ, DnaK and GrpE are required for fully efficient folding. In Gloeobacter violaceus (strain ATCC 29082 / PCC 7421), this protein is Protein GrpE.